The following is a 351-amino-acid chain: Prostaglandin reductase 2 (351 aa).

99 to 100 (FY) provides a ligand contact to substrate. NADP(+) is bound by residues 165–168 (GACG), lysine 192, tyrosine 208, asparagine 231, 253–259 (CGQISQY), 287–289 (FLV), and asparagine 337. 288–290 (LVL) provides a ligand contact to substrate.

This sequence belongs to the NADP-dependent oxidoreductase L4BD family. As to quaternary structure, monomer.

It localises to the cytoplasm. It carries out the reaction 13,14-dihydro-15-oxo-prostaglandin E2 + NAD(+) = 15-oxoprostaglandin E2 + NADH + H(+). It catalyses the reaction 13,14-dihydro-15-oxo-prostaglandin E2 + NADP(+) = 15-oxoprostaglandin E2 + NADPH + H(+). The enzyme catalyses 13,14-dihydro-15-oxo-PGF2alpha + NADP(+) = 15-oxoprostaglandin F2alpha + NADPH + H(+). The catalysed reaction is 13,14-dihydro-15-oxo-prostaglandin E1 + NADP(+) = 15-oxoprostaglandin E1 + NADPH + H(+). It carries out the reaction 13,14-dihydro-15-oxo-prostaglandin F1alpha + NADP(+) = 15-oxoprostaglandin F1alpha + NADPH + H(+). Functions as 15-oxo-prostaglandin 13-reductase and acts on 15-keto-PGE1, 15-keto-PGE2, 15-keto-PGE1-alpha and 15-keto-PGE2-alpha with highest activity towards 15-keto-PGE2. Overexpression represses transcriptional activity of PPARG and inhibits adipocyte differentiation. In Bos taurus (Bovine), this protein is Prostaglandin reductase 2 (PTGR2).